Here is a 148-residue protein sequence, read N- to C-terminus: Cdc42 effector protein 5 (148 aa).

Disordered regions lie at residues 1 to 89 (MPVL…DPLL) and 111 to 148 (RPEA…VIGL). The 15-residue stretch at 23–37 (ISAPLGDFRHTLHVG) folds into the CRIB domain. Position 38 is an omega-N-methylarginine (Arg-38). Pro residues predominate over residues 55 to 76 (GPPPEPRAPPAGAPRSPPPPAV). The span at 77-87 (PQSAAPSPADP) shows a compositional bias: low complexity.

It belongs to the BORG/CEP family. Interacts with CDC42, in a GTP-dependent manner, and with SEPT7.

It localises to the endomembrane system. Its subcellular location is the cytoplasm. The protein localises to the cytoskeleton. In terms of biological role, probably involved in the organization of the actin cytoskeleton. May act downstream of CDC42 to induce actin filament assembly leading to cell shape changes. Induces pseudopodia formation in fibroblasts. Inhibits MAPK8 independently of CDC42 binding. Controls septin organization and this effect is negatively regulated by CDC42. This is Cdc42 effector protein 5 (CDC42EP5) from Homo sapiens (Human).